The following is a 394-amino-acid chain: Aspergillopepsin-1 (394 aa).

Positions 1-20 are cleaved as a signal peptide; it reads MVVFSKTAALVLGLSSAVSA. Residues 21-69 constitute a propeptide, activation peptide; that stretch reads APAPTRKGFTINQIARPANKTRTINLPGMYARSLAKFGGTVPQSVKEAA. The Peptidase A1 domain maps to 85–391; the sequence is YLTPVTVGKS…NSEGPKLGFA (307 aa). Catalysis depends on residues Asp-101 and Asp-283. A disulfide bridge connects residues Cys-319 and Cys-354.

The protein belongs to the peptidase A1 family. In terms of assembly, monomer.

It is found in the secreted. It carries out the reaction Hydrolysis of proteins with broad specificity. Generally favors hydrophobic residues in P1 and P1', but also accepts Lys in P1, which leads to activation of trypsinogen. Does not clot milk.. In terms of biological role, secreted aspartic endopeptidase that allows assimilation of proteinaceous substrates. The scissile peptide bond is attacked by a nucleophilic water molecule activated by two aspartic residues in the active site. Shows a broad primary substrate specificity. Favors hydrophobic residues at the P1 and P1' positions, but also accepts a lysine residue in the P1 position, leading to the activation of trypsinogen and chymotrypsinogen A. The sequence is that of Aspergillopepsin-1 (pepA) from Aspergillus niger (strain ATCC MYA-4892 / CBS 513.88 / FGSC A1513).